The chain runs to 76 residues: uncharacterized protein (76 aa).

Residues V15–L69 enclose the HTH cro/C1-type domain. The segment at residues Q26–A45 is a DNA-binding region (H-T-H motif).

This is an uncharacterized protein from Sinorhizobium fredii (strain NBRC 101917 / NGR234).